The primary structure comprises 360 residues: Peptide chain release factor 1 (360 aa).

Q235 is modified (N5-methylglutamine).

Belongs to the prokaryotic/mitochondrial release factor family. Methylated by PrmC. Methylation increases the termination efficiency of RF1.

The protein localises to the cytoplasm. Peptide chain release factor 1 directs the termination of translation in response to the peptide chain termination codons UAG and UAA. The polypeptide is Peptide chain release factor 1 (Blochmanniella pennsylvanica (strain BPEN)).